Here is a 127-residue protein sequence, read N- to C-terminus: Large ribosomal subunit protein bL17 (127 aa).

The protein belongs to the bacterial ribosomal protein bL17 family. In terms of assembly, part of the 50S ribosomal subunit. Contacts protein L32.

This chain is Large ribosomal subunit protein bL17, found in Alcanivorax borkumensis (strain ATCC 700651 / DSM 11573 / NCIMB 13689 / SK2).